A 140-amino-acid polypeptide reads, in one-letter code: Small ribosomal subunit protein uS8c (140 aa).

It belongs to the universal ribosomal protein uS8 family. In terms of assembly, part of the 30S ribosomal subunit.

The protein resides in the plastid. It localises to the chloroplast. Its function is as follows. One of the primary rRNA binding proteins, it binds directly to 16S rRNA central domain where it helps coordinate assembly of the platform of the 30S subunit. This Euglena gracilis protein is Small ribosomal subunit protein uS8c (rps8).